Consider the following 400-residue polypeptide: Probable vacuolar protease A (400 aa).

A signal peptide spans 1-18 (MKGSLLLAGATLLGCTSA). The propeptide at 19 to 72 (KLHSLKLKKVSLKEQLEHADIDVQIKSLGQKYMGIRPEQHEQQMFKEQTPIEVE) is activation peptide. One can recognise a Peptidase A1 domain in the interval 87–397 (YFSEISIGTP…DLGKGTVGLA (311 aa)). Residue D105 is part of the active site. A disulfide bond links C118 and C123. N140 is a glycosylation site (N-linked (GlcNAc...) asparagine). The active site involves D289. C323 and C356 are joined by a disulfide. An N-linked (GlcNAc...) asparagine glycan is attached at N340.

The protein belongs to the peptidase A1 family.

The protein localises to the vacuole lumen. It is found in the secreted. The enzyme catalyses Hydrolysis of proteins with broad specificity for peptide bonds. Cleaves -Leu-Leu-|-Val-Tyr- bond in a synthetic substrate. Does not act on esters of Tyr or Arg.. In terms of biological role, vacuolar aspartic endopeptidase which is probably also secreted and contributes to virulence. This is Probable vacuolar protease A (PEP2) from Arthroderma benhamiae (strain ATCC MYA-4681 / CBS 112371) (Trichophyton mentagrophytes).